Reading from the N-terminus, the 524-residue chain is Metal transporter Nramp2 (524 aa).

The segment at 34-58 (AYDSDDKVSIAVSDSDSEDGGGGGG) is disordered. Transmembrane regions (helical) follow at residues 70–90 (LWRF…PGNL), 98–118 (AAAG…GALV), 155–175 (LALV…IKIL), 179–199 (TVPL…FLFL), 207–227 (LEAF…IMFG), 253–273 (AVGI…SALV), 295–315 (IESI…TTVF), 341–361 (YGTA…ASGQ), 389–409 (AMIT…FFDT), 420–440 (ALNV…ITLV), 457–477 (VISW…ILSF), and 486–506 (LVRS…VYLI).

Belongs to the NRAMP (TC 2.A.55) family.

It localises to the membrane. In terms of biological role, probable metal transporter. This chain is Metal transporter Nramp2 (NRAMP2), found in Oryza sativa subsp. japonica (Rice).